The chain runs to 90 residues: Small ribosomal subunit protein uS15 (90 aa).

Belongs to the universal ribosomal protein uS15 family. In terms of assembly, part of the 30S ribosomal subunit. Forms a bridge to the 50S subunit in the 70S ribosome, contacting the 23S rRNA.

One of the primary rRNA binding proteins, it binds directly to 16S rRNA where it helps nucleate assembly of the platform of the 30S subunit by binding and bridging several RNA helices of the 16S rRNA. In terms of biological role, forms an intersubunit bridge (bridge B4) with the 23S rRNA of the 50S subunit in the ribosome. The chain is Small ribosomal subunit protein uS15 from Campylobacter concisus (strain 13826).